The following is a 123-amino-acid chain: MIMRYENQKKHKNHSLCSSSSSAMAEESSFDSSLPFFFLFLGNLGKFFFLWPLKDLDLPLKFLDFEASLCKSNCFFVKTLSFLPSYDKISLDSSSLEYDFKKASHSGIVLNSTKTVPLNFLFL.

Residues 34–53 form a helical membrane-spanning segment; sequence LPFFFLFLGNLGKFFFLWPL.

The protein resides in the membrane. This is an uncharacterized protein from Saccharomyces cerevisiae (strain ATCC 204508 / S288c) (Baker's yeast).